Here is a 283-residue protein sequence, read N- to C-terminus: Pantothenate synthetase (283 aa).

Position 31 to 38 (31 to 38 (MGALHDGH)) interacts with ATP. The active-site Proton donor is the H38. Position 62 (Q62) interacts with (R)-pantoate. Q62 provides a ligand contact to beta-alanine. Residue 148 to 151 (GKKD) coordinates ATP. Q154 provides a ligand contact to (R)-pantoate. ATP-binding positions include V177 and 185–188 (KSSR).

The protein belongs to the pantothenate synthetase family. As to quaternary structure, homodimer.

Its subcellular location is the cytoplasm. It carries out the reaction (R)-pantoate + beta-alanine + ATP = (R)-pantothenate + AMP + diphosphate + H(+). Its pathway is cofactor biosynthesis; (R)-pantothenate biosynthesis; (R)-pantothenate from (R)-pantoate and beta-alanine: step 1/1. Catalyzes the condensation of pantoate with beta-alanine in an ATP-dependent reaction via a pantoyl-adenylate intermediate. The polypeptide is Pantothenate synthetase (Staphylococcus aureus (strain Mu3 / ATCC 700698)).